The following is a 136-amino-acid chain: Large-conductance mechanosensitive channel (136 aa).

A run of 3 helical transmembrane segments spans residues 15-35, 38-58, and 80-100; these read IDLAIGVIIGGAFGSLVNSIV, IFMPIIGLITGGIDFSNMFIQ, and GHFITLLINFLIIAWVLFFFV.

The protein belongs to the MscL family. In terms of assembly, homopentamer.

It localises to the cell inner membrane. In terms of biological role, channel that opens in response to stretch forces in the membrane lipid bilayer. May participate in the regulation of osmotic pressure changes within the cell. In Bartonella tribocorum (strain CIP 105476 / IBS 506), this protein is Large-conductance mechanosensitive channel.